The primary structure comprises 170 residues: MKDNERRILLGRVVGGFGLRGEIKIESWTEPRDAIFRYQPWLLRSPTGTESMLNGARGYETGKRLIATFPGINDRNAVEAICGTEIYVPRSALPPPHPDEYYWVDLEGLQVHTLEGVVLGSVSHLFSNGANDVIVIHGERERLIPFVQPDYVKSVDFEAERIVVDWDPEF.

One can recognise a PRC barrel domain in the interval 98 to 170 (PDEYYWVDLE…RIVVDWDPEF (73 aa)).

It belongs to the RimM family. Binds ribosomal protein uS19.

The protein localises to the cytoplasm. In terms of biological role, an accessory protein needed during the final step in the assembly of 30S ribosomal subunit, possibly for assembly of the head region. Essential for efficient processing of 16S rRNA. May be needed both before and after RbfA during the maturation of 16S rRNA. It has affinity for free ribosomal 30S subunits but not for 70S ribosomes. The sequence is that of Ribosome maturation factor RimM from Xylella fastidiosa (strain 9a5c).